A 425-amino-acid chain; its full sequence is Aromatic prenyl transferase ptmE (425 aa).

L-tryptophan is bound by residues 83-84 (GI) and E92. Residues R107, K198, Y200, R265, K267, Y269, Y345, Y410, and Y414 each coordinate substrate.

It belongs to the tryptophan dimethylallyltransferase family. As to quaternary structure, homodimer.

Its pathway is secondary metabolite biosynthesis. In terms of biological role, aromatic prenyl transferase; part of the gene cluster that mediates the biosynthesis of the indole diterpenes penitrems. The geranylgeranyl diphosphate (GGPP) synthase ptmG catalyzes the first step in penitrem biosynthesis via conversion of farnesyl pyrophosphate and isopentyl pyrophosphate into geranylgeranyl pyrophosphate (GGPP). Condensation of indole-3-glycerol phosphate with GGPP by the prenyl transferase ptmC then forms 3-geranylgeranylindole (3-GGI). Epoxidation by the FAD-dependent monooxygenase ptmM leads to a epoxidized-GGI that is substrate of the terpene cyclase ptmB for cyclization to yield paspaline. Paspaline is subsequently converted to 13-desoxypaxilline by the cytochrome P450 monooxygenase ptmP, the latter being then converted to paxilline by the cytochrome P450 monooxygenase ptmQ. Paxilline is converted to beta-paxitriol via C-10 ketoreduction by the short-chain dehydrogenase ptmH which can be monoprenylated at the C-20 by the indole diterpene prenyltransferase ptmD. A two-step elimination (acetylation and elimination) process performed by the O-acetyltransferase ptmV and ptmI leads to the production of the prenylated form of penijanthine. The FAD-linked oxidoreductase ptmO then converts the prenylated form of penijanthine into PC-M5 which is in turn transformed into PC-M4 by the aromatic dimethylallyltransferase ptmE. Five sequential oxidative transformations performed by the cytochrome P450 monooxygenases ptmK, ptmU, ptmL, ptmN and ptmJ yield the various penitrem compounds. PtmK, ptmU and ptmM are involved in the formation of the key bicyclic ring of penitrem C via the formation of the intermediates secopenitrem D and penitrem D. PtmL catalyzes the epoxidation of penitrem D and C to yield penitrem B and F, respectively. PtmJ catalyzes the last benzylic hydroxylation to convert penitrem B to prenitrem E and penitrem F to penitrem A. The protein is Aromatic prenyl transferase ptmE of Penicillium ochrochloron.